The sequence spans 194 residues: Putative manganese efflux pump MntP (194 aa).

6 consecutive transmembrane segments (helical) span residues 6–26 (LILV…GLAL), 35–55 (WLFA…GLYL), 66–86 (VAAI…LWEA), 109–129 (GVLG…LDAL), 142–162 (VPLT…LGLL), and 174–194 (RAEL…LVGV).

It belongs to the MntP (TC 9.B.29) family.

The protein resides in the cell membrane. Functionally, probably functions as a manganese efflux pump. The chain is Putative manganese efflux pump MntP from Moorella thermoacetica (strain ATCC 39073 / JCM 9320).